A 266-amino-acid chain; its full sequence is Vitamin B12-binding protein (266 aa).

A signal peptide spans 1-22 (MVKQMFRALVALLLTLPVWLYA). Residues 25–266 (RVITLSPANT…QLCNALSQVN (242 aa)) enclose the Fe/B12 periplasmic-binding domain. Cyanocob(III)alamin-binding positions include tyrosine 50 and 242–246 (DWFER). The cysteines at positions 183 and 259 are disulfide-linked.

This sequence belongs to the BtuF family. The complex is composed of two ATP-binding proteins (BtuD), two transmembrane proteins (BtuC) and a solute-binding protein (BtuF).

The protein resides in the periplasm. Part of the ABC transporter complex BtuCDF involved in vitamin B12 import. Binds vitamin B12 and delivers it to the periplasmic surface of BtuC. In Salmonella choleraesuis (strain SC-B67), this protein is Vitamin B12-binding protein.